A 340-amino-acid polypeptide reads, in one-letter code: Probable glucan endo-1,3-beta-glucosidase BG1 (340 aa).

The first 25 residues, 1–25 (MDLRFLASLTLLLGLFFVNTNPTGG), serve as a signal peptide directing secretion. E120 functions as the Proton donor in the catalytic mechanism. The Nucleophile role is filled by E262.

Belongs to the glycosyl hydrolase 17 family.

The protein resides in the secreted. It catalyses the reaction Hydrolysis of (1-&gt;3)-beta-D-glucosidic linkages in (1-&gt;3)-beta-D-glucans.. Functionally, may play a role in plant defense against pathogens. This is Probable glucan endo-1,3-beta-glucosidase BG1 from Arabidopsis thaliana (Mouse-ear cress).